A 344-amino-acid polypeptide reads, in one-letter code: S-adenosylmethionine:tRNA ribosyltransferase-isomerase (344 aa).

Belongs to the QueA family. Monomer.

It is found in the cytoplasm. It catalyses the reaction 7-aminomethyl-7-carbaguanosine(34) in tRNA + S-adenosyl-L-methionine = epoxyqueuosine(34) in tRNA + adenine + L-methionine + 2 H(+). It participates in tRNA modification; tRNA-queuosine biosynthesis. In terms of biological role, transfers and isomerizes the ribose moiety from AdoMet to the 7-aminomethyl group of 7-deazaguanine (preQ1-tRNA) to give epoxyqueuosine (oQ-tRNA). This Acinetobacter baylyi (strain ATCC 33305 / BD413 / ADP1) protein is S-adenosylmethionine:tRNA ribosyltransferase-isomerase.